The sequence spans 245 residues: 2,3-bisphosphoglycerate-dependent phosphoglycerate mutase (245 aa).

Substrate is bound by residues 8–15 (RHGQSLWN), 21–22 (TG), arginine 60, 87–90 (ERHY), lysine 98, 114–115 (RR), and 183–184 (GN). The active-site Tele-phosphohistidine intermediate is histidine 9. Residue glutamate 87 is the Proton donor/acceptor of the active site.

This sequence belongs to the phosphoglycerate mutase family. BPG-dependent PGAM subfamily.

It catalyses the reaction (2R)-2-phosphoglycerate = (2R)-3-phosphoglycerate. Its pathway is carbohydrate degradation; glycolysis; pyruvate from D-glyceraldehyde 3-phosphate: step 3/5. Catalyzes the interconversion of 2-phosphoglycerate and 3-phosphoglycerate. The protein is 2,3-bisphosphoglycerate-dependent phosphoglycerate mutase of Bacillus cereus (strain B4264).